The primary structure comprises 98 residues: uncharacterized protein (98 aa).

The protein resides in the cytoplasm. This is an uncharacterized protein from Saccharomyces cerevisiae (strain ATCC 204508 / S288c) (Baker's yeast).